Consider the following 480-residue polypeptide: Caspase-8 (480 aa).

The propeptide occupies 1–218 (MDFQSCLYAI…ELCDSPREQD (218 aa)). 2 consecutive DED domains span residues 3 to 80 (FQSC…NFLD) and 101 to 177 (YRVM…KIED). 2 positions are modified to phosphoserine: serine 188 and serine 213. At lysine 226 the chain carries N6-acetyllysine. Residue histidine 319 is part of the active site. Tyrosine 336 bears the Phosphotyrosine mark. Residue cysteine 362 is part of the active site. A propeptide spanning residues 377-387 (FEQQNHTLEVD) is cleaved from the precursor. Phosphoserine; by CDK1 is present on serine 389.

Belongs to the peptidase C14A family. In terms of assembly, heterotetramer that consists of two anti-parallel arranged heterodimers, each one formed by a 18 kDa (p18) and a 10 kDa (p10) subunit. Component of the death-induced signaling complex (DISC) composed of cell surface receptor FAS/CD95 or TNFRSF1A, adapter protein FADD and the CASP8 protease; recruitment of CASP8 to the complex is required for processing of CASP8 into the p18 and p10 subunits. Component of the AIM2 PANoptosome complex, a multiprotein complex that drives inflammatory cell death (PANoptosis). Interacts with CFLAR and PEA15. Interacts with RFFL and RNF34; negatively regulate CASP8 through proteasomal degradation. Interacts with TNFAIP8L2. Interacts with CASP8AP2. Interacts with NOL3; decreases CASP8 activity in a mitochondria localization- and phosphorylation-dependent manner and this interaction is dissociated by calcium. Interacts with UBR2. Interacts with RIPK1. Interacts with stimulated TNFRSF10B; this interaction is followed by CASP8 proteolytic cleavage and activation. In terms of processing, generation of the subunits requires association with the death-inducing signaling complex (DISC), whereas additional processing is likely due to the autocatalytic activity of the activated protease. GZMB and CASP10 can be involved in these processing events. Post-translationally, (Microbial infection) Proteolytically cleaved by the cowpox virus CRMA death inhibitory protein. Phosphorylation on Ser-389 during mitosis by CDK1 inhibits activation by proteolysis and prevents apoptosis. This phosphorylation occurs in cancer cell lines, as well as in primary breast tissues and lymphocytes. Expressed in a wide variety of tissues. Highest expression in spleen, thymus, lung, liver and kidney. Lower expression in heart, brain, testis and skeletal muscle.

It localises to the cytoplasm. The protein resides in the nucleus. It carries out the reaction Strict requirement for Asp at position P1 and has a preferred cleavage sequence of (Leu/Asp/Val)-Glu-Thr-Asp-|-(Gly/Ser/Ala).. CASP8 activity is restricted by RIPK1. With respect to regulation, (Microbial infection) Inhibited by baculovirus p35 protein P35. Functionally, thiol protease that plays a key role in programmed cell death by acting as a molecular switch for apoptosis, necroptosis and pyroptosis, and is required to prevent tissue damage during embryonic development and adulthood. Initiator protease that induces extrinsic apoptosis by mediating cleavage and activation of effector caspases responsible for FAS/CD95-mediated and TNFRSF1A-induced cell death. Cleaves and activates effector caspases CASP3, CASP4, CASP6, CASP7, CASP9 and CASP10. Binding to the adapter molecule FADD recruits it to either receptor FAS/CD95 or TNFRSF1A. The resulting aggregate called the death-inducing signaling complex (DISC) performs CASP8 proteolytic activation. The active dimeric enzyme is then liberated from the DISC and free to activate downstream apoptotic proteases. Proteolytic fragments of the N-terminal propeptide (termed CAP3, CAP5 and CAP6) are likely retained in the DISC. In addition to extrinsic apoptosis, also acts as a negative regulator of necroptosis: acts by cleaving RIPK1 at 'Asp-325', which is crucial to inhibit RIPK1 kinase activity, limiting TNF-induced apoptosis, necroptosis and inflammatory response. Also able to initiate pyroptosis by mediating cleavage and activation of gasdermin-C and -D (GSDMC and GSDMD, respectively): gasdermin cleavage promotes release of the N-terminal moiety that binds to membranes and forms pores, triggering pyroptosis. Initiates pyroptosis following inactivation of MAP3K7/TAK1. Also acts as a regulator of innate immunity by mediating cleavage and inactivation of N4BP1 downstream of TLR3 or TLR4, thereby promoting cytokine production. May participate in the Granzyme B (GZMB) cell death pathways. Cleaves PARP1 and PARP2. The protein is Caspase-8 of Mus musculus (Mouse).